Consider the following 134-residue polypeptide: Replication enhancer protein (134 aa).

This sequence belongs to the geminiviridae replication enhancer protein family. Homooligomer. Interacts with the replication-associated protein (REP). Interacts with host proliferating cell nuclear antigen (PCNA). Interacts with host retinoblastoma-related protein 1 (RBR1), and may thereby deregulate the host cell cycle. Oligomerization and interaction with PCNA are necessary for optimal replication enhancement.

Its function is as follows. Increases viral DNA accumulation. Enhances infectivity and symptom expression. This is Replication enhancer protein from Tomato leaf curl virus (strain Australia) (ToLCV).